The sequence spans 43 residues: Hainantoxin F5-22.36 (43 aa).

3 disulfide bridges follow: C1–C19, C8–C24, and C18–C38.

The protein belongs to the neurotoxin 14 (magi-1) family. 02 (HWTX-XVIc) subfamily. Expressed by the venom gland.

The protein localises to the secreted. Probable ion channel inhibitor. The sequence is that of Hainantoxin F5-22.36 from Cyriopagopus hainanus (Chinese bird spider).